Consider the following 265-residue polypeptide: Protein N-terminal and lysine N-methyltransferase EFM7 (265 aa).

The tract at residues 1–25 is disordered; that stretch reads MSSDHEEDSLYGATELFGEPDGFYE. S-adenosyl-L-methionine contacts are provided by residues Trp-67, 93-95, Asp-115, Trp-152, and Ser-176; that span reads GAA.

The protein belongs to the class I-like SAM-binding methyltransferase superfamily. EFM7 family.

Its subcellular location is the cytoplasm. Functionally, S-adenosyl-L-methionine-dependent protein methyltransferase that trimethylates the N-terminal glycine 'Gly-2' of elongation factor 1-alpha, before also catalyzing the mono- and dimethylation of 'Lys-3'. The protein is Protein N-terminal and lysine N-methyltransferase EFM7 of Eremothecium gossypii (strain ATCC 10895 / CBS 109.51 / FGSC 9923 / NRRL Y-1056) (Yeast).